A 918-amino-acid polypeptide reads, in one-letter code: Serine/threonine-protein kinase D1 (918 aa).

Tyr93 carries the post-translational modification Phosphotyrosine. A Phorbol-ester/DAG-type 1 zinc finger spans residues 144-194 (PHALFVHSYRAPAFCDHCGEMLWGLVRQGLKCEGCGLNYHKRCAFKIPNNC). Residues Ser203, Ser206, Ser217, and Ser221 each carry the phosphoserine modification. Residues 276–326 (PHTFVIHSYTRPTVCQFCKKLLKGLFRQGLQCKDCRFNCHKRCAPKVPNNC) form a Phorbol-ester/DAG-type 2 zinc finger. Disordered regions lie at residues 338–362 (SPGA…NSGL) and 380–408 (EGQS…STSN). Composition is skewed to acidic residues over residues 345-355 (VVMEEGSDDND) and 387-396 (EMQDPDADQE). At Ser351 the chain carries Phosphoserine. Phosphoserine; by MAPK13 occurs at positions 403 and 407. The PH domain maps to 428–547 (TVMKEGWMVH…WEVAIQHALM (120 aa)). Tyr438 carries the post-translational modification Phosphotyrosine. At Ser454 the chain carries Phosphoserine. A Phosphotyrosine; by ABL modification is found at Tyr469. Tyr508 is modified (phosphotyrosine). Ser554 carries the phosphoserine modification. The Protein kinase domain maps to 589-845 (IFPDEVLGSG…VDKTLSHPWL (257 aa)). Residues 595–603 (LGSGQFGIV) and Lys618 contribute to the ATP site. Catalysis depends on Asp712, which acts as the Proton acceptor. Ser744 is subject to Phosphoserine; by PKC/PRKCD. At Ser748 the chain carries Phosphoserine; by autocatalysis and PKC/PRKCD. A Phosphotyrosine modification is found at Tyr755. Phosphoserine; by autocatalysis is present on Ser916.

This sequence belongs to the protein kinase superfamily. CAMK Ser/Thr protein kinase family. PKD subfamily. In terms of assembly, interacts (via N-terminus) with ADAP1/CENTA1. Interacts with MAPK13. Interacts with DAPK1 in an oxidative stress-regulated manner. Interacts with USP28; the interaction induces phosphorylation of USP28 and activated KRAS-mediated stabilization of ZNF304. Interacts with AKAP13 (via C-terminal domain). The cofactor is Mg(2+). In terms of processing, phosphorylated at Ser-403 and Ser-407 by MAPK13 during regulation of insulin secretion in pancreatic beta cells. Phosphorylated by DAPK1. Phosphorylated at Tyr-93 and by ABL at Tyr-469, which primes the kinase in response to oxidative stress, and promotes a second step activating phosphorylation at Ser-744/Ser-748 by PKRD. Phosphorylated on Ser-916 upon S.enterica infection in macrophages.

It localises to the cytoplasm. The protein resides in the cell membrane. It is found in the golgi apparatus. Its subcellular location is the trans-Golgi network. The enzyme catalyses L-seryl-[protein] + ATP = O-phospho-L-seryl-[protein] + ADP + H(+). It catalyses the reaction L-threonyl-[protein] + ATP = O-phospho-L-threonyl-[protein] + ADP + H(+). With respect to regulation, activated by DAG and phorbol esters. Phorbol-ester/DAG-type domain 1 binds DAG with high affinity and appears to play the dominant role in mediating translocation to the cell membrane and trans-Golgi network. Phorbol-ester/DAG-type domain 2 binds phorbol ester with higher affinity. Autophosphorylation of Ser-748 and phosphorylation of Ser-744 by PKC relieves auto-inhibition by the PH domain. Phosphorylation on Tyr-469 by the SRC-ABL1 pathway in response to oxidative stress, is also required for activation. Activated by DAPK1 under oxidative stress. In terms of biological role, serine/threonine-protein kinase that converts transient diacylglycerol (DAG) signals into prolonged physiological effects downstream of PKC, and is involved in the regulation of MAPK8/JNK1 and Ras signaling, Golgi membrane integrity and trafficking, cell survival through NF-kappa-B activation, cell migration, cell differentiation by mediating HDAC7 nuclear export, cell proliferation via MAPK1/3 (ERK1/2) signaling, and plays a role in cardiac hypertrophy, VEGFA-induced angiogenesis, genotoxic-induced apoptosis and flagellin-stimulated inflammatory response. Phosphorylates the epidermal growth factor receptor (EGFR) on dual threonine residues, which leads to the suppression of epidermal growth factor (EGF)-induced MAPK8/JNK1 activation and subsequent JUN phosphorylation. Phosphorylates RIN1, inducing RIN1 binding to 14-3-3 proteins YWHAB, YWHAE and YWHAZ and increased competition with RAF1 for binding to GTP-bound form of Ras proteins (NRAS, HRAS and KRAS). Acts downstream of the heterotrimeric G-protein beta/gamma-subunit complex to maintain the structural integrity of the Golgi membranes, and is required for protein transport along the secretory pathway. In the trans-Golgi network (TGN), regulates the fission of transport vesicles that are on their way to the plasma membrane. May act by activating the lipid kinase phosphatidylinositol 4-kinase beta (PI4KB) at the TGN for the local synthesis of phosphorylated inositol lipids, which induces a sequential production of DAG, phosphatidic acid (PA) and lyso-PA (LPA) that are necessary for membrane fission and generation of specific transport carriers to the cell surface. Under oxidative stress, is phosphorylated at Tyr-469 via SRC-ABL1 and contributes to cell survival by activating IKK complex and subsequent nuclear translocation and activation of NFKB1. Involved in cell migration by regulating integrin alpha-5/beta-3 recycling and promoting its recruitment in newly forming focal adhesion. In osteoblast differentiation, mediates the bone morphogenetic protein 2 (BMP2)-induced nuclear export of HDAC7, which results in the inhibition of HDAC7 transcriptional repression of RUNX2. In neurons, plays an important role in neuronal polarity by regulating the biogenesis of TGN-derived dendritic vesicles, and is involved in the maintenance of dendritic arborization and Golgi structure in hippocampal cells. May potentiate mitogenesis induced by the neuropeptide bombesin or vasopressin by mediating an increase in the duration of MAPK1/3 (ERK1/2) signaling, which leads to accumulation of immediate-early gene products including FOS that stimulate cell cycle progression. Plays an important role in the proliferative response induced by low calcium in keratinocytes, through sustained activation of MAPK1/3 (ERK1/2) pathway. Downstream of novel PKC signaling, plays a role in cardiac hypertrophy by phosphorylating HDAC5, which in turn triggers XPO1/CRM1-dependent nuclear export of HDAC5, MEF2A transcriptional activation and induction of downstream target genes that promote myocyte hypertrophy and pathological cardiac remodeling. Mediates cardiac troponin I (TNNI3) phosphorylation at the PKA sites, which results in reduced myofilament calcium sensitivity, and accelerated crossbridge cycling kinetics. The PRKD1-HDAC5 pathway is also involved in angiogenesis by mediating VEGFA-induced specific subset of gene expression, cell migration, and tube formation. In response to VEGFA, is necessary and required for HDAC7 phosphorylation which induces HDAC7 nuclear export and endothelial cell proliferation and migration. During apoptosis induced by cytarabine and other genotoxic agents, PRKD1 is cleaved by caspase-3 at Asp-378, resulting in activation of its kinase function and increased sensitivity of cells to the cytotoxic effects of genotoxic agents. In epithelial cells, is required for transducing flagellin-stimulated inflammatory responses by binding and phosphorylating TLR5, which contributes to MAPK14/p38 activation and production of inflammatory cytokines. Acts as an activator of NLRP3 inflammasome assembly by mediating phosphorylation of NLRP3. May play a role in inflammatory response by mediating activation of NF-kappa-B. May be involved in pain transmission by directly modulating TRPV1 receptor. Plays a role in activated KRAS-mediated stabilization of ZNF304 in colorectal cancer (CRC) cells. Regulates nuclear translocation of transcription factor TFEB in macrophages upon live S.enterica infection. The protein is Serine/threonine-protein kinase D1 (Prkd1) of Rattus norvegicus (Rat).